Here is a 314-residue protein sequence, read N- to C-terminus: Acetyl-coenzyme A carboxylase carboxyl transferase subunit beta (314 aa).

Residues 24 to 293 enclose the CoA carboxyltransferase N-terminal domain; the sequence is LWIKCPDTGQ…IDAAPEPSPA (270 aa). The interval 283–314 is disordered; it reads EIDAAPEPSPAAEEPAEPMPAPEAAAPSAPPA. Composition is skewed to low complexity over residues 284 to 295 and 304 to 314; these read IDAAPEPSPAAE and PEAAAPSAPPA.

It belongs to the AccD/PCCB family. In terms of assembly, acetyl-CoA carboxylase is a heterohexamer composed of biotin carboxyl carrier protein (AccB), biotin carboxylase (AccC) and two subunits each of ACCase subunit alpha (AccA) and ACCase subunit beta (AccD).

The protein localises to the cytoplasm. It carries out the reaction N(6)-carboxybiotinyl-L-lysyl-[protein] + acetyl-CoA = N(6)-biotinyl-L-lysyl-[protein] + malonyl-CoA. Its pathway is lipid metabolism; malonyl-CoA biosynthesis; malonyl-CoA from acetyl-CoA: step 1/1. Component of the acetyl coenzyme A carboxylase (ACC) complex. Biotin carboxylase (BC) catalyzes the carboxylation of biotin on its carrier protein (BCCP) and then the CO(2) group is transferred by the transcarboxylase to acetyl-CoA to form malonyl-CoA. The protein is Acetyl-coenzyme A carboxylase carboxyl transferase subunit beta of Nitrobacter hamburgensis (strain DSM 10229 / NCIMB 13809 / X14).